A 242-amino-acid chain; its full sequence is Peptidyl-prolyl cis-trans isomerase FKBP20-2, chloroplastic (242 aa).

Residues 1 to 31 constitute a chloroplast transit peptide; the sequence is MVTILSTPLSPRLTFLCETKLSLSRSNRSVC. A thylakoid-targeting transit peptide spans 32–67; it reads CSLSEEPKDQCLSRRSLVYVLVASPCLLLPALSSSA. Positions 138-225 constitute a PPIase FKBP-type domain; the sequence is GQQVTFHYIG…VFDVELLSIQ (88 aa). Cysteine 227 and cysteine 241 form a disulfide bridge.

It belongs to the FKBP-type PPIase family. In terms of assembly, interacts in vitro with LTO1.

It is found in the plastid. Its subcellular location is the chloroplast thylakoid lumen. It catalyses the reaction [protein]-peptidylproline (omega=180) = [protein]-peptidylproline (omega=0). Its function is as follows. PPIases accelerate the folding of proteins. It catalyzes the cis-trans isomerization of proline imidic peptide bonds in oligopeptides. Involved in the accumulation of the PSII complex. The sequence is that of Peptidyl-prolyl cis-trans isomerase FKBP20-2, chloroplastic from Arabidopsis thaliana (Mouse-ear cress).